The following is a 528-amino-acid chain: Ceramide glucosyltransferase (528 aa).

At M1–E6 the chain is on the lumenal side. The helical transmembrane segment at C7–V27 threads the bilayer. Over R28–P369 the chain is Cytoplasmic. A short sequence motif (D1) is located at residue D94. Position 154 (D154) is a short sequence motif, D2. Position 308 (D308) is a short sequence motif, D3. Residue D308 is the Proton acceptor of the active site. Residues R349–W353 carry the (Q/R)XXRW motif. The chain crosses the membrane as a helical span at residues F370–L390. Residues S391 to A402 are Lumenal-facing. A helical membrane pass occupies residues T403–L423. Over R424–E457 the chain is Cytoplasmic. The chain crosses the membrane as a helical span at residues F458–V478. The Lumenal portion of the chain corresponds to F479–D528. The segment at P503–D528 is disordered.

This sequence belongs to the glycosyltransferase 2 family.

The protein resides in the golgi apparatus membrane. The enzyme catalyses an N-acylsphing-4-enine + UDP-alpha-D-glucose = a beta-D-glucosyl-(1&lt;-&gt;1')-N-acylsphing-4-enine + UDP + H(+). Its pathway is lipid metabolism; sphingolipid metabolism. In terms of biological role, catalyzes the final step in the biosynthesis of the membrane lipid glucosylceramide (GluCer), the transfer of glucose to ceramide. Glucosylceramides play important roles in growth, differentiation and pathogenicity. Contribution to fungal pathogenesis is host-dependent. The protein is Ceramide glucosyltransferase of Gibberella zeae (strain ATCC MYA-4620 / CBS 123657 / FGSC 9075 / NRRL 31084 / PH-1) (Wheat head blight fungus).